Here is a 328-residue protein sequence, read N- to C-terminus: H-2 class I histocompatibility antigen, K-Q alpha chain (328 aa).

Positions 1-71 (PRFISVGYVD…LLRYYNQSAG (71 aa)) are alpha-1. Over 1 to 265 (PRFISVGYVD…EPPPSAVSNT (265 aa)) the chain is Extracellular. N67 carries N-linked (GlcNAc...) asparagine glycosylation. Positions 72–163 (GSHTIQRMYG…KNGNATLLRT (92 aa)) are alpha-2. C82 and C145 form a disulfide bridge. N-linked (GlcNAc...) asparagine glycosylation occurs at N157. Residues 164-255 (DSPKAHVTHH…GLPKPLTLRW (92 aa)) form an alpha-3 region. One can recognise an Ig-like C1-type domain in the interval 166-252 (PKAHVTHHSR…YHQGLPKPLT (87 aa)). C184 and C240 are joined by a disulfide. A connecting peptide region spans residues 256–265 (EPPPSAVSNT). Residues 266–289 (VIIAVLVVLGAAIVTGAVVAFVMM) traverse the membrane as a helical segment. Residues 290–328 (RRRNTGGKGGDYALAPGSQTSDLSLPDCKVMVHDPHSLA) lie on the Cytoplasmic side of the membrane. Residues S310 and S313 each carry the phosphoserine modification.

The protein belongs to the MHC class I family. In terms of assembly, heterodimer of an alpha chain and a beta chain (beta-2-microglobulin).

It localises to the membrane. Functionally, involved in the presentation of foreign antigens to the immune system. The polypeptide is H-2 class I histocompatibility antigen, K-Q alpha chain (H2-K1) (Mus musculus (Mouse)).